We begin with the raw amino-acid sequence, 111 residues long: Large ribosomal subunit protein uL22 (111 aa).

The protein belongs to the universal ribosomal protein uL22 family. Part of the 50S ribosomal subunit.

This protein binds specifically to 23S rRNA; its binding is stimulated by other ribosomal proteins, e.g. L4, L17, and L20. It is important during the early stages of 50S assembly. It makes multiple contacts with different domains of the 23S rRNA in the assembled 50S subunit and ribosome. Functionally, the globular domain of the protein is located near the polypeptide exit tunnel on the outside of the subunit, while an extended beta-hairpin is found that lines the wall of the exit tunnel in the center of the 70S ribosome. The chain is Large ribosomal subunit protein uL22 from Chlamydia pneumoniae (Chlamydophila pneumoniae).